The chain runs to 680 residues: UvrABC system protein C (680 aa).

Residues 66 to 144 enclose the GIY-YIG domain; sequence NSPGVYRMFN…IKRLRPRFNV (79 aa). The UVR domain maps to 254–289; the sequence is QKVKSHMAEAMNQAAEDLDFERAAIYRDRLAALSHV.

It belongs to the UvrC family. As to quaternary structure, interacts with UvrB in an incision complex.

It localises to the cytoplasm. Its function is as follows. The UvrABC repair system catalyzes the recognition and processing of DNA lesions. UvrC both incises the 5' and 3' sides of the lesion. The N-terminal half is responsible for the 3' incision and the C-terminal half is responsible for the 5' incision. The chain is UvrABC system protein C from Rhizobium johnstonii (strain DSM 114642 / LMG 32736 / 3841) (Rhizobium leguminosarum bv. viciae).